Here is a 55-residue protein sequence, read N- to C-terminus: ATP synthase F(0) complex subunit 8 (55 aa).

Residues 7–24 (APWFSIMIMTWLTLALLI) traverse the membrane as a helical segment. Positions 34 to 55 (TNPPSSKPSLTTKPTPWAWPWT) are disordered.

The protein belongs to the ATPase protein 8 family. As to quaternary structure, component of the ATP synthase complex composed at least of ATP5F1A/subunit alpha, ATP5F1B/subunit beta, ATP5MC1/subunit c (homooctomer), MT-ATP6/subunit a, MT-ATP8/subunit 8, ATP5ME/subunit e, ATP5MF/subunit f, ATP5MG/subunit g, ATP5MK/subunit k, ATP5MJ/subunit j, ATP5F1C/subunit gamma, ATP5F1D/subunit delta, ATP5F1E/subunit epsilon, ATP5PF/subunit F6, ATP5PB/subunit b, ATP5PD/subunit d, ATP5PO/subunit OSCP. ATP synthase complex consists of a soluble F(1) head domain (subunits alpha(3) and beta(3)) - the catalytic core - and a membrane F(0) domain - the membrane proton channel (subunits c, a, 8, e, f, g, k and j). These two domains are linked by a central stalk (subunits gamma, delta, and epsilon) rotating inside the F1 region and a stationary peripheral stalk (subunits F6, b, d, and OSCP).

Its subcellular location is the mitochondrion membrane. Subunit 8, of the mitochondrial membrane ATP synthase complex (F(1)F(0) ATP synthase or Complex V) that produces ATP from ADP in the presence of a proton gradient across the membrane which is generated by electron transport complexes of the respiratory chain. ATP synthase complex consist of a soluble F(1) head domain - the catalytic core - and a membrane F(1) domain - the membrane proton channel. These two domains are linked by a central stalk rotating inside the F(1) region and a stationary peripheral stalk. During catalysis, ATP synthesis in the catalytic domain of F(1) is coupled via a rotary mechanism of the central stalk subunits to proton translocation. In vivo, can only synthesize ATP although its ATP hydrolase activity can be activated artificially in vitro. Part of the complex F(0) domain. The chain is ATP synthase F(0) complex subunit 8 from Aythya americana (Redhead).